A 194-amino-acid chain; its full sequence is Gonadal protein gdl (194 aa).

Belongs to the gonadal family. As to expression, in stage 6-14 egg chamber nurse cells and oocytes of adult females and spermatocyte cysts and bundles of maturing sperm of larval, pupal and adult males.

This Drosophila melanogaster (Fruit fly) protein is Gonadal protein gdl (gdl).